A 462-amino-acid chain; its full sequence is NADH-quinone oxidoreductase subunit N (462 aa).

The next 13 membrane-spanning stretches (helical) occupy residues 15-35 (LSYP…CSGF), 42-62 (FYIG…LNNA), 80-100 (IVSF…LLMQ), 113-133 (LFMI…LIFI), 161-181 (YFSI…FIYL), 204-224 (LLGA…LAPF), 239-259 (LVAF…IRLF), 267-287 (FEYI…FAAL), 295-315 (MFAY…IPLL), 323-343 (ILLA…AVFM), 366-386 (IAFC…FGVF), 396-416 (VILN…VIML), and 441-461 (FIQN…ILLM).

It belongs to the complex I subunit 2 family. NDH-1 is composed of 14 different subunits. Subunits NuoA, H, J, K, L, M, N constitute the membrane sector of the complex.

The protein resides in the cell inner membrane. The catalysed reaction is a quinone + NADH + 5 H(+)(in) = a quinol + NAD(+) + 4 H(+)(out). In terms of biological role, NDH-1 shuttles electrons from NADH, via FMN and iron-sulfur (Fe-S) centers, to quinones in the respiratory chain. The immediate electron acceptor for the enzyme in this species is believed to be ubiquinone. Couples the redox reaction to proton translocation (for every two electrons transferred, four hydrogen ions are translocated across the cytoplasmic membrane), and thus conserves the redox energy in a proton gradient. This chain is NADH-quinone oxidoreductase subunit N, found in Campylobacter jejuni (strain RM1221).